Reading from the N-terminus, the 983-residue chain is 3',5'-cyclic-AMP phosphodiesterase, isoforms N/G (983 aa).

Disordered regions lie at residues 31–333 (MPEG…SAGL), 349–370 (SDSD…ASES), 400–429 (VPAS…LSQG), and 528–566 (SAGQ…RLPT). Positions 35–50 (GEDHRGDLNQKGENNN) are enriched in basic and acidic residues. Residues 51–60 (RPRPSISLAN) are compositionally biased toward polar residues. A compositionally biased stretch (gly residues) spans 84-97 (SVGGGDSDGGGEAI). 2 stretches are compositionally biased toward low complexity: residues 112 to 121 (LSTTTSNSSS) and 145 to 167 (QLQQ…SQRS). Over residues 174–199 (AEGEEFDVDPMDEDDEDQTYDRETEE) the composition is skewed to acidic residues. Composition is skewed to low complexity over residues 219–234 (SSLF…TTSS) and 248–261 (AASI…SDLM). Polar residues-rich tracts occupy residues 268 to 287 (STAT…SQRR), 358 to 368 (KSMSRNSSIAS), and 401 to 419 (PASN…SRSG). A PDEase domain is found at 569–898 (VETPRENELG…DYYQSMIPPS (330 aa)). The Proton donor role is filled by histidine 645. Residue 645–649 (HNSLH) coordinates 3',5'-cyclic AMP. Residues histidine 649, histidine 685, aspartate 686, and aspartate 803 each coordinate a divalent metal cation. 3',5'-cyclic AMP is bound by residues aspartate 686, aspartate 803, and glutamine 854. Residues 920–937 (EESDQENLAELEEGDESG) are compositionally biased toward acidic residues. Residues 920–983 (EESDQENLAE…CQNQPQHGGM (64 aa)) form a disordered region. A compositionally biased stretch (low complexity) spans 938 to 955 (GESTTTGTTGTTAASALS). The span at 956–967 (GAGGGGGGGGGM) shows a compositional bias: gly residues. The segment covering 973–983 (GCQNQPQHGGM) has biased composition (polar residues).

This sequence belongs to the cyclic nucleotide phosphodiesterase family. PDE4 subfamily. Monomer. A divalent metal cation is required as a cofactor.

The catalysed reaction is 3',5'-cyclic AMP + H2O = AMP + H(+). The protein operates within purine metabolism; 3',5'-cyclic AMP degradation; AMP from 3',5'-cyclic AMP: step 1/1. In terms of biological role, hydrolyzes the second messenger cAMP, which is a key regulator of many important physiological processes. Vital for female fertility. Required for learning/memory. The sequence is that of 3',5'-cyclic-AMP phosphodiesterase, isoforms N/G from Drosophila melanogaster (Fruit fly).